We begin with the raw amino-acid sequence, 184 residues long: MKNVTDSFVSLGHWPSAGSFGFNTDILATNPINLSVVLGVLIFFGKGVLSDLLDNRKQRILNTIRNSEELREGAIEQLEKARSRLRKVETEAEQFRVNGYSEIEREKLNLINSTYKTLEQLENYKNETIQFEQQRAINQVRQRVFQQALRGALGTLNSCLNNELHLRTISANIGMLGTMKEITD.

Residues 27–49 (LATNPINLSVVLGVLIFFGKGVL) traverse the membrane as a helical segment.

It belongs to the ATPase B chain family. F-type ATPases have 2 components, F(1) - the catalytic core - and F(0) - the membrane proton channel. F(1) has five subunits: alpha(3), beta(3), gamma(1), delta(1), epsilon(1). F(0) has four main subunits: a(1), b(1), b'(1) and c(10-14). The alpha and beta chains form an alternating ring which encloses part of the gamma chain. F(1) is attached to F(0) by a central stalk formed by the gamma and epsilon chains, while a peripheral stalk is formed by the delta, b and b' chains.

The protein resides in the plastid. It localises to the chloroplast thylakoid membrane. Its function is as follows. F(1)F(0) ATP synthase produces ATP from ADP in the presence of a proton or sodium gradient. F-type ATPases consist of two structural domains, F(1) containing the extramembraneous catalytic core and F(0) containing the membrane proton channel, linked together by a central stalk and a peripheral stalk. During catalysis, ATP synthesis in the catalytic domain of F(1) is coupled via a rotary mechanism of the central stalk subunits to proton translocation. In terms of biological role, component of the F(0) channel, it forms part of the peripheral stalk, linking F(1) to F(0). The polypeptide is ATP synthase subunit b, chloroplastic (Atropa belladonna (Belladonna)).